The sequence spans 450 residues: Glutamyl-tRNA(Gln) amidotransferase subunit A, mitochondrial (450 aa).

Active-site charge relay system residues include Lys47 and Ser122. The active-site Acyl-ester intermediate is Ser146.

It belongs to the amidase family. GatA subfamily. Subunit of the heterotrimeric GatFAB amidotransferase (AdT) complex, composed of A, B and F subunits.

Its subcellular location is the mitochondrion. It catalyses the reaction L-glutamyl-tRNA(Gln) + L-glutamine + ATP + H2O = L-glutaminyl-tRNA(Gln) + L-glutamate + ADP + phosphate + H(+). Its function is as follows. Allows the formation of correctly charged Gln-tRNA(Gln) through the transamidation of misacylated Glu-tRNA(Gln) in the mitochondria. The reaction takes place in the presence of glutamine and ATP through an activated gamma-phospho-Glu-tRNA(Gln). The protein is Glutamyl-tRNA(Gln) amidotransferase subunit A, mitochondrial of Candida albicans (strain WO-1) (Yeast).